The sequence spans 447 residues: T-box transcription factor TBX20 (447 aa).

Residues 62-81 (DAHGEFGGGSGSSPSSSSLC) are disordered. A DNA-binding region (T-box) is located at residues 109-288 (LWDKFHELGT…SNPFAKGFRD (180 aa)). A disordered region spans residues 316 to 340 (TYGGEEDVLGDESQTTPNRGSAFTT). Positions 327-340 (ESQTTPNRGSAFTT) are enriched in polar residues.

The protein localises to the nucleus. Acts as a transcriptional activator and repressor required for cardiac development and may have key roles in the maintenance of functional and structural phenotypes in adult heart. In Homo sapiens (Human), this protein is T-box transcription factor TBX20 (TBX20).